Reading from the N-terminus, the 177-residue chain is Keratin-associated protein 1-1 (177 aa).

Belongs to the KRTAP type 1 family. In terms of assembly, interacts with hair keratins. As to expression, expressed in the middle/upper portions of the hair cortex, in the region termed the keratogenous zone.

In terms of biological role, in the hair cortex, hair keratin intermediate filaments are embedded in an interfilamentous matrix, consisting of hair keratin-associated proteins (KRTAP), which are essential for the formation of a rigid and resistant hair shaft through their extensive disulfide bond cross-linking with abundant cysteine residues of hair keratins. The matrix proteins include the high-sulfur and high-glycine-tyrosine keratins. The chain is Keratin-associated protein 1-1 (KRTAP1-1) from Homo sapiens (Human).